The chain runs to 331 residues: Holliday junction branch migration complex subunit RuvB (331 aa).

Residues 1 to 186 (MAKTMMQDRL…FGIVQRLEFY (186 aa)) are large ATPase domain (RuvB-L). ATP is bound by residues isoleucine 25, arginine 26, glycine 67, lysine 70, threonine 71, threonine 72, 133-135 (EDF), arginine 176, tyrosine 186, and arginine 223. Threonine 71 serves as a coordination point for Mg(2+). The small ATPAse domain (RuvB-S) stretch occupies residues 187–257 (NIADLTTIVS…IAGSALDMLA (71 aa)). Positions 260 to 331 (RRGLDHLDRR…LTQMAIDQML (72 aa)) are head domain (RuvB-H). 3 residues coordinate DNA: arginine 296, arginine 315, and arginine 320.

The protein belongs to the RuvB family. As to quaternary structure, homohexamer. Forms an RuvA(8)-RuvB(12)-Holliday junction (HJ) complex. HJ DNA is sandwiched between 2 RuvA tetramers; dsDNA enters through RuvA and exits via RuvB. An RuvB hexamer assembles on each DNA strand where it exits the tetramer. Each RuvB hexamer is contacted by two RuvA subunits (via domain III) on 2 adjacent RuvB subunits; this complex drives branch migration. In the full resolvosome a probable DNA-RuvA(4)-RuvB(12)-RuvC(2) complex forms which resolves the HJ.

It localises to the cytoplasm. It catalyses the reaction ATP + H2O = ADP + phosphate + H(+). Functionally, the RuvA-RuvB-RuvC complex processes Holliday junction (HJ) DNA during genetic recombination and DNA repair, while the RuvA-RuvB complex plays an important role in the rescue of blocked DNA replication forks via replication fork reversal (RFR). RuvA specifically binds to HJ cruciform DNA, conferring on it an open structure. The RuvB hexamer acts as an ATP-dependent pump, pulling dsDNA into and through the RuvAB complex. RuvB forms 2 homohexamers on either side of HJ DNA bound by 1 or 2 RuvA tetramers; 4 subunits per hexamer contact DNA at a time. Coordinated motions by a converter formed by DNA-disengaged RuvB subunits stimulates ATP hydrolysis and nucleotide exchange. Immobilization of the converter enables RuvB to convert the ATP-contained energy into a lever motion, pulling 2 nucleotides of DNA out of the RuvA tetramer per ATP hydrolyzed, thus driving DNA branch migration. The RuvB motors rotate together with the DNA substrate, which together with the progressing nucleotide cycle form the mechanistic basis for DNA recombination by continuous HJ branch migration. Branch migration allows RuvC to scan DNA until it finds its consensus sequence, where it cleaves and resolves cruciform DNA. This Psychrobacter cryohalolentis (strain ATCC BAA-1226 / DSM 17306 / VKM B-2378 / K5) protein is Holliday junction branch migration complex subunit RuvB.